Reading from the N-terminus, the 325-residue chain is 26S proteasome non-ATPase regulatory subunit 7 (325 aa).

The MPN domain occupies Thr-8–Ile-142. Positions Lys-285–Ala-325 are disordered. Over residues Ser-292–Ser-302 the composition is skewed to low complexity.

Belongs to the peptidase M67A family.

Acts as a regulatory subunit of the 26S proteasome which is involved in the ATP-dependent degradation of ubiquitinated proteins. This chain is 26S proteasome non-ATPase regulatory subunit 7 (psmD7), found in Dictyostelium discoideum (Social amoeba).